The chain runs to 342 residues: Heparan sulfate glucosamine 3-O-sulfotransferase 6 (342 aa).

Residues 1 to 31 (MAGSGGLGGGAGDLQGAGTGQGTALRALRAP) lie on the Cytoplasmic side of the membrane. A helical; Signal-anchor for type II membrane protein transmembrane segment spans residues 32 to 49 (LALVVLLLSAYCLFALPG). Residues 50–342 (RCPPAARAPA…QMTGQDFGWD (293 aa)) are Lumenal-facing. A disordered region spans residues 56-75 (RAPAPVPAPAEPPHTSLRLR). 100–104 (KGGTR) provides a ligand contact to 3'-phosphoadenylyl sulfate. Residues 122-128 (EPHFFDR) and 153-156 (KTPS) contribute to the substrate site. 3'-phosphoadenylyl sulfate contacts are provided by Arg-181 and Ser-189. Substrate is bound at residue 220 to 221 (WS). Asn-281 carries an N-linked (GlcNAc...) asparagine glycan. Residues Cys-288 and Cys-300 are joined by a disulfide bond. Residue 305 to 309 (KGRPH) participates in 3'-phosphoadenylyl sulfate binding.

Belongs to the sulfotransferase 1 family. In terms of tissue distribution, expressed in liver and kidney, followed by heart, brain, lung and testis.

It localises to the golgi apparatus membrane. It carries out the reaction alpha-D-glucosaminyl-[heparan sulfate](n) + 3'-phosphoadenylyl sulfate = 3-sulfo-alpha-D-glucosaminyl-[heparan sulfate](n) + adenosine 3',5'-bisphosphate + H(+). In terms of biological role, sulfotransferase that utilizes 3'-phospho-5'-adenylyl sulfate (PAPS) to catalyze the transfer of a sulfo group to heparan sulfate. Unlike 3-OST-1, does not convert non-anticoagulant heparan sulfate to anticoagulant heparan sulfate. This is Heparan sulfate glucosamine 3-O-sulfotransferase 6 (Hs3st6) from Mus musculus (Mouse).